The following is a 158-amino-acid chain: Large ribosomal subunit protein mL50 (158 aa).

This sequence belongs to the mitochondrion-specific ribosomal protein mL50 family. As to quaternary structure, component of the mitochondrial large ribosomal subunit (mt-LSU). Mature mammalian 55S mitochondrial ribosomes consist of a small (28S) and a large (39S) subunit. The 28S small subunit contains a 12S ribosomal RNA (12S mt-rRNA) and 30 different proteins. The 39S large subunit contains a 16S rRNA (16S mt-rRNA), a copy of mitochondrial valine transfer RNA (mt-tRNA(Val)), which plays an integral structural role, and 52 different proteins.

Its subcellular location is the mitochondrion. The polypeptide is Large ribosomal subunit protein mL50 (MRPL50) (Homo sapiens (Human)).